Here is a 57-residue protein sequence, read N- to C-terminus: Myrmicitoxin(1)-Pm7a (57 aa).

The N-terminal stretch at 1-23 (MMKIIYAFLLIAVVAFMGSGIMA) is a signal peptide. The propeptide occupies 24–31 (EPLAEAIA).

Belongs to the formicidae venom clade 4 family. As to expression, expressed by the venom gland.

It localises to the secreted. Its function is as follows. Probable neurotoxin. In Pogonomyrmex maricopa (Maricopa harvester ant), this protein is Myrmicitoxin(1)-Pm7a.